A 578-amino-acid chain; its full sequence is MALLCSALSNSTHPSFRSHIAGANSENLWHLSAHPAQKSKRRCNLTLSSRAAARISSALESGKLKPWQIPKRDWFPPEFTFGAASAAYQIEGAWNEGGKGPSSWDNFCHNYPERIMDGSNWDVAANSYYMYKEDVRMLKEIGMDSYRFSISWPRILPEGTLEGGINHEGIQYYNDLLDCLIENGIKPYITLFHWDTPQALADKYNDFLDRRIVKDYTDYATVCFEHFGDKVKNWITFNEPHSFCGLAYGTGLHAPGLCSPGMDCAIPQGDALRQPYIVGHNLLLAHAETVDVYKKFYKGDDGQIGMVMDVMAYEPYGNNFVDQQAQERSIDFHIGWFLEPMVRGDYPFSMRSLVGDRLPFFTKSEQEKLVSSYDFVGINYYTARFSEHIDISPEIIPKLNTDDAYSTPEFNDSNGIPIGPDLGMYWILSYPKGLKDILLLMKEKYGNPPIYITENGTADMDGWGNPPMTDPLDDPLRIEYLQQHMTAIKEAIDLGADVRGHFTWSLIDNFEWSMGYLSRFGIVYIDRNDGFKRIMKKSAKWLKEFNGATKEVNNKILGASSCCSGELMWFLVQNPYGK.

The transit peptide at 1 to 57 directs the protein to the chloroplast; it reads MALLCSALSNSTHPSFRSHIAGANSENLWHLSAHPAQKSKRRCNLTLSSRAAARISS. A beta-D-glucoside is bound by residues Gln-89, His-193, and 238 to 239; that span reads NE. The Proton donor role is filled by Glu-239. A disulfide bond links Cys-258 and Cys-264. A beta-D-glucoside is bound by residues Tyr-381, Glu-454, Trp-504, 511 to 512, and Phe-520; that span reads EW. Glu-454 serves as the catalytic Nucleophile.

The protein belongs to the glycosyl hydrolase 1 family. In terms of assembly, heteromultimer with P60A in a 1:1 stoichiometry. Aggregates to form the fibrillar stromacentre.

Its subcellular location is the plastid. It is found in the chloroplast stroma. The catalysed reaction is avenacoside B + H2O = 26-desgluco-avenacoside B + D-glucose. Its function is as follows. Beta-glucosidase acting as a preformed defense system. Hydrolyzes the bisdesmosides avenacosides A and B to 26-desgluco-avenacosides exhibiting fungicidal activity. Can use beta-fucoside &gt; beta-glucoside &gt; beta-galactoside &gt; beta-xyloside as substrates, but not alpha-glycosides, beta-thioglucosides and disaccharides. This is Avenacosidase 2 (P60B) from Avena sativa (Oat).